The primary structure comprises 101 residues: Large ribosomal subunit protein bL21 (101 aa).

It belongs to the bacterial ribosomal protein bL21 family. Part of the 50S ribosomal subunit. Contacts protein L20.

In terms of biological role, this protein binds to 23S rRNA in the presence of protein L20. This chain is Large ribosomal subunit protein bL21, found in Corynebacterium efficiens (strain DSM 44549 / YS-314 / AJ 12310 / JCM 11189 / NBRC 100395).